Here is a 564-residue protein sequence, read N- to C-terminus: Hexose transporter HXT13 (564 aa).

Topologically, residues 1-52 (MSSAQSSIDSDGDVRDADIHVAPPVEKEWSDGFDDNEVINGDNVEPPKRGLI) are cytoplasmic. The helical transmembrane segment at 53-73 (GYLVIYLLCYPISFGGFLPGW) threads the bilayer. The Extracellular segment spans residues 74-109 (DSGITAGFINMDNFKMNFGSYKHSTGEYYLSNVRMG). A helical transmembrane segment spans residues 110–130 (LLVAMFSIGCAIGGLIFARLA). Over 131–136 (DTLGRR) the chain is Cytoplasmic. A helical transmembrane segment spans residues 137-157 (LAIVIVVLVYMVGAIIQISSN). Over 158–167 (HKWYQYFVGK) the chain is Extracellular. The chain crosses the membrane as a helical span at residues 168-188 (IIYGLGAGGCSVLCPMLLSEI). At 189–194 (APTDLR) the chain is on the cytoplasmic side. The chain crosses the membrane as a helical span at residues 195 to 215 (GGLVSLYQLNMTFGIFLGYCS). The Extracellular segment spans residues 216 to 229 (VYGTRKYDNTAQWR). Residues 230-250 (VPLGLCFLWALIIIIGMLLVP) traverse the membrane as a helical segment. The Cytoplasmic portion of the chain corresponds to 251–333 (ESPRYLIECE…VQTFLQLTGE (83 aa)). Residues 334–350 (NYFFFYGTTIFKSVGLT) traverse the membrane as a helical segment. The Extracellular portion of the chain corresponds to 351–356 (DGFETS). A helical transmembrane segment spans residues 357–374 (IVLGTVNFFSTIIAVMVV). Topologically, residues 375 to 381 (DKIGRRK) are cytoplasmic. Residues 382 to 402 (CLLFGAAGMMACMVIFASIGV) traverse the membrane as a helical segment. Topologically, residues 403–424 (KCLYPHGQDGPSSKGAGNAMIV) are extracellular. Residues 425-445 (FTCFYIFCFATTWAPVAYIVV) traverse the membrane as a helical segment. Residues 446–462 (AESFPSKVKSRAMSIST) lie on the Cytoplasmic side of the membrane. A helical transmembrane segment spans residues 463–483 (ACNWLWQFLIGFFTPFITGSI). A topological domain (extracellular) is located at residue histidine 484. Residues 485–505 (FYYGYVFVGCLVAMFLYVFFF) traverse the membrane as a helical segment. Residues 506-564 (LPETIGLSLEEIQLLYEEGIKPWKSASWVPPSRRGISSEESKTEKKDWKKFLKFSKNSD) are Cytoplasmic-facing. Residues 530 to 551 (SASWVPPSRRGISSEESKTEKK) form a disordered region. Over residues 541 to 551 (ISSEESKTEKK) the composition is skewed to basic and acidic residues.

It belongs to the major facilitator superfamily. Sugar transporter (TC 2.A.1.1) family.

It localises to the membrane. In terms of biological role, probable glucose transporter. This is Hexose transporter HXT13 (HXT13) from Saccharomyces cerevisiae (strain ATCC 204508 / S288c) (Baker's yeast).